The chain runs to 579 residues: Glycine--tRNA ligase (579 aa).

Glycine is bound at residue Glu-175. ATP contacts are provided by residues 207 to 209 (RNE) and 218 to 219 (RV). A glycine-binding site is contributed by Glu-226. 327–328 (EC) serves as a coordination point for ATP. Residue 442–444 (EPS) coordinates glycine. An ATP-binding site is contributed by Arg-449.

It belongs to the class-II aminoacyl-tRNA synthetase family. In terms of assembly, homodimer.

The catalysed reaction is tRNA(Gly) + glycine + ATP = glycyl-tRNA(Gly) + AMP + diphosphate. The enzyme catalyses 2 ATP + H(+) = P(1),P(4)-bis(5'-adenosyl) tetraphosphate + diphosphate. Catalyzes the ATP-dependent ligation of glycine to the 3'-end of its cognate tRNA, via the formation of an aminoacyl-adenylate intermediate (Gly-AMP). Also produces diadenosine tetraphosphate (Ap4A), a universal pleiotropic signaling molecule needed for cell regulation pathways, by direct condensation of 2 ATPs. Thereby, may play a special role in Ap4A homeostasis. This chain is Glycine--tRNA ligase, found in Encephalitozoon cuniculi (strain GB-M1) (Microsporidian parasite).